The following is a 289-amino-acid chain: 26S proteasome non-ATPase regulatory subunit 8 (289 aa).

S45 is modified (phosphoserine). Positions 101–270 (PSFERYMAQL…QQKPEDTTIP (170 aa)) constitute a PCI domain. A Glycyl lysine isopeptide (Lys-Gly) (interchain with G-Cter in SUMO2) cross-link involves residue K236.

This sequence belongs to the proteasome subunit S14 family. In terms of assembly, component of the 19S proteasome regulatory particle complex. The 26S proteasome consists of a 20S core particle (CP) and two 19S regulatory subunits (RP). The regulatory particle is made of a lid composed of 9 subunits including PSMD8, a base containing 6 ATPases and few additional components. Interacts with DDI2. Interacts with TASOR.

In terms of biological role, component of the 26S proteasome, a multiprotein complex involved in the ATP-dependent degradation of ubiquitinated proteins. This complex plays a key role in the maintenance of protein homeostasis by removing misfolded or damaged proteins, which could impair cellular functions, and by removing proteins whose functions are no longer required. Therefore, the proteasome participates in numerous cellular processes, including cell cycle progression, apoptosis, or DNA damage repair. The chain is 26S proteasome non-ATPase regulatory subunit 8 (PSMD8) from Pongo abelii (Sumatran orangutan).